The primary structure comprises 199 residues: dCTP deaminase (199 aa).

DCTP contacts are provided by residues 110 to 115, aspartate 128, 136 to 138, tyrosine 171, and glutamine 182; these read RSSLAR and VLE. Catalysis depends on glutamate 138, which acts as the Proton donor/acceptor.

Belongs to the dCTP deaminase family. In terms of assembly, homotrimer.

The enzyme catalyses dCTP + H2O + H(+) = dUTP + NH4(+). Its pathway is pyrimidine metabolism; dUMP biosynthesis; dUMP from dCTP (dUTP route): step 1/2. Its function is as follows. Catalyzes the deamination of dCTP to dUTP. The chain is dCTP deaminase from Pseudoalteromonas atlantica (strain T6c / ATCC BAA-1087).